Reading from the N-terminus, the 315-residue chain is Probable cell division protein WhiA (315 aa).

A DNA-binding region (H-T-H motif) is located at residues 280-313 (SLKELGQMLDPQVGKSGINHRLRKIEKIAEELRT).

This sequence belongs to the WhiA family.

Involved in cell division and chromosome segregation. This Clostridium botulinum (strain Alaska E43 / Type E3) protein is Probable cell division protein WhiA.